Here is a 306-residue protein sequence, read N- to C-terminus: Ribonuclease Z (306 aa).

Zn(2+)-binding residues include His-63, His-65, Asp-67, His-68, His-141, Asp-211, and His-269. Catalysis depends on Asp-67, which acts as the Proton acceptor.

This sequence belongs to the RNase Z family. In terms of assembly, homodimer. Zn(2+) is required as a cofactor.

It carries out the reaction Endonucleolytic cleavage of RNA, removing extra 3' nucleotides from tRNA precursor, generating 3' termini of tRNAs. A 3'-hydroxy group is left at the tRNA terminus and a 5'-phosphoryl group is left at the trailer molecule.. In terms of biological role, zinc phosphodiesterase, which displays some tRNA 3'-processing endonuclease activity. Probably involved in tRNA maturation, by removing a 3'-trailer from precursor tRNA. The chain is Ribonuclease Z from Staphylococcus carnosus (strain TM300).